We begin with the raw amino-acid sequence, 394 residues long: Outer membrane protein S1 (394 aa).

The N-terminal stretch at 1-21 (MNRKVLALLVPALLVAGAANA) is a signal peptide. The disordered stretch occupies residues 222–242 (SSSDRSDNQVARGYGDGMNER).

It belongs to the Gram-negative porin family. Homotrimer.

The protein localises to the cell outer membrane. In terms of biological role, forms pores that allow passive diffusion of small molecules across the outer membrane. This chain is Outer membrane protein S1 (ompS1), found in Salmonella typhi.